Consider the following 736-residue polypeptide: Segment polarity protein dishevelled homolog DVL-2 (736 aa).

A DIX domain is found at 11–93; it reads VGETKVIYHL…RVVSWLVSSD (83 aa). A disordered region spans residues 93 to 255; the sequence is DTPQPEVAPP…RMERTSSFSS (163 aa). Over residues 111–122 the composition is skewed to pro residues; that stretch reads VPPPPPLPPLPP. Positions 159-171 are enriched in basic and acidic residues; sequence LRRDRPRRRDSSE. Residues 193 to 208 are compositionally biased toward low complexity; sequence ESSSTLMTSELESTSL. Residue serine 211 is modified to Phosphoserine. Over residues 218 to 230 the composition is skewed to polar residues; that stretch reads SRFSSSTEQSSAS. The segment covering 232-244 has biased composition (basic residues); that stretch reads LLKRHRRRRKQRP. A PDZ domain is found at 267 to 339; sequence TVTLNMEKYN…NDDAVRVLRD (73 aa). The region spanning 433–507 is the DEP domain; the sequence is PESGLEVRDR…SEQCYYVFGD (75 aa). Positions 558-568 are enriched in pro residues; it reads PHPYSPQPPPY. Residues 558 to 665 form a disordered region; it reads PHPYSPQPPP…PNLRALPGLH (108 aa). 2 stretches are compositionally biased toward low complexity: residues 581-598 and 614-629; these read ASSQ…TRSD and SKSG…SRGG.

It belongs to the DSH family. Interacts through its PDZ domain with the C-terminal regions of VANGL1 and VANGL2. Interacts with Rac. Interacts with ARRB1; the interaction is enhanced by phosphorylation of DVL1. Can form large oligomers (via DIX domain). Interacts (via DIX domain) with DIXDC1 (via DIX domain). Interacts (via DEP domain) with AP2M1 and the AP-2 complex. Interacts with FAM105B/otulin. Interacts with DCDC2. Interacts (when phosphorylated) with FOXK1 and FOXK2; the interaction induces DVL2 nuclear translocation. Interacts with MAPK15. Interacts with PKD1 (via extracellular domain). Interacts with LMBR1L. Post-translationally, phosphorylated by CSNK1D. WNT3A induces DVL2 phosphorylation by CSNK1E and MARK kinases. In terms of processing, ubiquitinated via 'Lys-63'-linked polyubiquitin chains; leading to its autophagy-mediated degradation. Ubiquitous.

Its subcellular location is the cell membrane. The protein localises to the cytoplasm. It is found in the cytosol. The protein resides in the cytoplasmic vesicle. It localises to the nucleus. In terms of biological role, plays a role in the signal transduction pathways mediated by multiple Wnt genes. Participates both in canonical and non-canonical Wnt signaling by binding to the cytoplasmic C-terminus of frizzled family members and transducing the Wnt signal to down-stream effectors. Promotes internalization and degradation of frizzled proteins upon Wnt signaling. The chain is Segment polarity protein dishevelled homolog DVL-2 (Dvl2) from Mus musculus (Mouse).